The sequence spans 44 residues: Cytochrome b559 subunit beta (44 aa).

The chain crosses the membrane as a helical span at residues 19–35 (WLSVHALAVPTVFFIGA). A heme-binding site is contributed by His23.

Belongs to the PsbE/PsbF family. Heterodimer of an alpha subunit and a beta subunit. PSII is composed of 1 copy each of membrane proteins PsbA, PsbB, PsbC, PsbD, PsbE, PsbF, PsbH, PsbI, PsbJ, PsbK, PsbL, PsbM, PsbT, PsbX, PsbY, PsbZ, Psb30/Ycf12, peripheral proteins PsbO, CyanoQ (PsbQ), PsbU, PsbV and a large number of cofactors. It forms dimeric complexes. The cofactor is heme b.

The protein resides in the cellular thylakoid membrane. Its function is as follows. This b-type cytochrome is tightly associated with the reaction center of photosystem II (PSII). PSII is a light-driven water:plastoquinone oxidoreductase that uses light energy to abstract electrons from H(2)O, generating O(2) and a proton gradient subsequently used for ATP formation. It consists of a core antenna complex that captures photons, and an electron transfer chain that converts photonic excitation into a charge separation. This Rippkaea orientalis (strain PCC 8801 / RF-1) (Cyanothece sp. (strain PCC 8801)) protein is Cytochrome b559 subunit beta.